Here is a 319-residue protein sequence, read N- to C-terminus: Malate dehydrogenase (319 aa).

NAD(+) contacts are provided by residues 10 to 15 (GAGNIG) and aspartate 34. Residues arginine 83 and arginine 89 each contribute to the substrate site. NAD(+) contacts are provided by residues asparagine 96 and 119–121 (ITN). Residues asparagine 121 and arginine 152 each coordinate substrate. Catalysis depends on histidine 176, which acts as the Proton acceptor.

Belongs to the LDH/MDH superfamily. MDH type 3 family.

It carries out the reaction (S)-malate + NAD(+) = oxaloacetate + NADH + H(+). Catalyzes the reversible oxidation of malate to oxaloacetate. The polypeptide is Malate dehydrogenase (Francisella tularensis subsp. mediasiatica (strain FSC147)).